The following is a 1032-amino-acid chain: uncharacterized protein (1032 aa).

Disordered regions lie at residues 54–80 (NNNNNNNNNNNNNNNNNNNNNNNNNNN), 391–451 (QLQI…QTHL), and 884–934 (INNE…SKVK). Positions 884 to 907 (INNENNNENNNNYNGNINSNNNNN) are enriched in low complexity.

This is an uncharacterized protein from Dictyostelium discoideum (Social amoeba).